We begin with the raw amino-acid sequence, 459 residues long: Ribulose bisphosphate carboxylase large chain (459 aa).

Lys4 bears the N6,N6,N6-trimethyllysine mark. Substrate is bound by residues Asn113 and Thr163. The active-site Proton acceptor is Lys165. Lys167 is a substrate binding site. Residues Lys191, Asp193, and Glu194 each coordinate Mg(2+). N6-carboxylysine is present on Lys191. The Proton acceptor role is filled by His284. Substrate-binding residues include Arg285, His317, and Ser369.

It belongs to the RuBisCO large chain family. Type I subfamily. As to quaternary structure, heterohexadecamer of 8 large chains and 8 small chains; disulfide-linked. The disulfide link is formed within the large subunit homodimers. Requires Mg(2+) as cofactor. In terms of processing, the disulfide bond which can form in the large chain dimeric partners within the hexadecamer appears to be associated with oxidative stress and protein turnover.

The protein resides in the plastid. It localises to the chloroplast. It carries out the reaction 2 (2R)-3-phosphoglycerate + 2 H(+) = D-ribulose 1,5-bisphosphate + CO2 + H2O. The enzyme catalyses D-ribulose 1,5-bisphosphate + O2 = 2-phosphoglycolate + (2R)-3-phosphoglycerate + 2 H(+). Its function is as follows. RuBisCO catalyzes two reactions: the carboxylation of D-ribulose 1,5-bisphosphate, the primary event in carbon dioxide fixation, as well as the oxidative fragmentation of the pentose substrate in the photorespiration process. Both reactions occur simultaneously and in competition at the same active site. In Roridula gorgonias (South African fly bush), this protein is Ribulose bisphosphate carboxylase large chain.